A 587-amino-acid polypeptide reads, in one-letter code: Protein cereblon (587 aa).

Disordered regions lie at residues Met-1–Tyr-56, Asp-78–Asn-113, and Phe-157–Gly-195. 2 stretches are compositionally biased toward polar residues: residues Glu-22–Gln-31 and Ser-86–Ser-96. A compositionally biased stretch (basic and acidic residues) spans Gln-159–Glu-168. Residues Thr-170 to Asp-181 are compositionally biased toward acidic residues. Over residues Pro-182–Pro-191 the composition is skewed to pro residues. The 227-residue stretch at His-227–Thr-453 folds into the Lon N-terminal domain. Positions Glu-452–Lys-561 constitute a CULT domain. Residues Cys-457, Cys-460, Cys-526, and Cys-529 each contribute to the Zn(2+) site.

The protein belongs to the CRBN family. In terms of assembly, likely a component of a DCX (DDB1-CUL4-X-box) protein ligase complex. May interact with pic/DDB1. Post-translationally, ubiquitinated.

The protein localises to the nucleus. It functions in the pathway protein modification; protein ubiquitination. In terms of biological role, substrate recognition component of a DCX (DDB1-CUL4-X-box) E3 protein ligase complex that mediates the ubiquitination and subsequent proteasomal degradation of target proteins. Has an essential role in mediating growth by negatively regulating insulin signaling. It also has a role in maintaining presynaptic function in the neuromuscular junction synapses of third-instar larvae. This is Protein cereblon from Drosophila simulans (Fruit fly).